A 64-amino-acid chain; its full sequence is Large ribosomal subunit protein bL35 (64 aa).

This sequence belongs to the bacterial ribosomal protein bL35 family.

The protein is Large ribosomal subunit protein bL35 of Vibrio vulnificus (strain CMCP6).